The sequence spans 389 residues: Chalcone synthase 9 (389 aa).

C164 is an active-site residue.

Belongs to the thiolase-like superfamily. Chalcone/stilbene synthases family.

It catalyses the reaction (E)-4-coumaroyl-CoA + 3 malonyl-CoA + 3 H(+) = 2',4,4',6'-tetrahydroxychalcone + 3 CO2 + 4 CoA. The protein operates within secondary metabolite biosynthesis; flavonoid biosynthesis. Functionally, the primary product of this enzyme is 4,2',4',6'-tetrahydroxychalcone (also termed naringenin-chalcone or chalcone) which can under specific conditions spontaneously isomerize into naringenin. The chain is Chalcone synthase 9 (CHS9) from Daucus carota (Wild carrot).